The sequence spans 179 residues: Large ribosomal subunit protein uL5 (179 aa).

It belongs to the universal ribosomal protein uL5 family. In terms of assembly, part of the 50S ribosomal subunit; part of the 5S rRNA/L5/L18/L25 subcomplex. Contacts the 5S rRNA and the P site tRNA. Forms a bridge to the 30S subunit in the 70S ribosome.

This is one of the proteins that bind and probably mediate the attachment of the 5S RNA into the large ribosomal subunit, where it forms part of the central protuberance. In the 70S ribosome it contacts protein S13 of the 30S subunit (bridge B1b), connecting the 2 subunits; this bridge is implicated in subunit movement. Contacts the P site tRNA; the 5S rRNA and some of its associated proteins might help stabilize positioning of ribosome-bound tRNAs. In Pseudomonas putida (strain W619), this protein is Large ribosomal subunit protein uL5.